The primary structure comprises 500 residues: ATP synthase subunit alpha (500 aa).

169–176 (GDRQTGKT) contacts ATP.

Belongs to the ATPase alpha/beta chains family. F-type ATPases have 2 components, CF(1) - the catalytic core - and CF(0) - the membrane proton channel. CF(1) has five subunits: alpha(3), beta(3), gamma(1), delta(1), epsilon(1). CF(0) has three main subunits: a(1), b(2) and c(9-12). The alpha and beta chains form an alternating ring which encloses part of the gamma chain. CF(1) is attached to CF(0) by a central stalk formed by the gamma and epsilon chains, while a peripheral stalk is formed by the delta and b chains.

The protein localises to the cell membrane. The enzyme catalyses ATP + H2O + 4 H(+)(in) = ADP + phosphate + 5 H(+)(out). In terms of biological role, produces ATP from ADP in the presence of a proton gradient across the membrane. The alpha chain is a regulatory subunit. The chain is ATP synthase subunit alpha from Lactococcus lactis subsp. lactis (strain IL1403) (Streptococcus lactis).